A 451-amino-acid chain; its full sequence is COBRA-like protein 6 (451 aa).

Residues 1–21 (MAVLGSLLLLILAATLSVAVA) form the signal peptide. Residues Asn-30, Asn-155, Asn-163, Asn-202, Asn-227, Asn-323, Asn-338, and Asn-357 are each glycosylated (N-linked (GlcNAc...) asparagine). Residue Asn-426 is the site of GPI-anchor amidated asparagine attachment. Residues 427–451 (AAPPAAASLVGSAVAMAALVFFLMA) constitute a propeptide, removed in mature form.

The protein belongs to the COBRA family.

It is found in the cell membrane. Its function is as follows. Involved in determining the orientation of cell expansion, probably by playing an important role in cellulose deposition. May act by recruiting cellulose synthesizing complexes to discrete positions on the cell surface. The sequence is that of COBRA-like protein 6 (BC1L7) from Oryza sativa subsp. japonica (Rice).